Reading from the N-terminus, the 407-residue chain is Heparan-sulfate 6-O-sulfotransferase 1-B (407 aa).

The Cytoplasmic segment spans residues 8–14 (MVERTSK). A helical; Signal-anchor for type II membrane protein membrane pass occupies residues 15-35 (FLLIVVGSVFFMLILYQYVAP). Residues 36-407 (GVINFGSPHG…DYMNHIINGW (372 aa)) lie on the Lumenal side of the membrane. 92–100 (HIQKTGGTT) is a 3'-phosphoadenylyl sulfate binding site. Substrate-binding positions include 122–123 (KK), Arg139, Trp144, and His149. The active-site Proton acceptor is His149. The 3'-phosphoadenylyl sulfate site is built by Arg183 and Ser191. Substrate is bound by residues His195 and Trp202. The N-linked (GlcNAc...) asparagine glycan is linked to Asn262. Residue 315–317 (MQY) coordinates 3'-phosphoadenylyl sulfate. A glycan (N-linked (GlcNAc...) asparagine) is linked at Asn318. Residue 321–322 (RA) participates in 3'-phosphoadenylyl sulfate binding. An N-linked (GlcNAc...) asparagine glycan is attached at Asn329.

The protein belongs to the sulfotransferase 6 family. As to expression, during early somitogenesis, first expressed in floor plate and somites. During mid-somitogenesis, expressed strongly in somites and more weakly in eye and hindbrain. During late somitogenesis, expressed in eye, hindbrain and posterior somites. At 24 hours post-fertilization (hpf), expressed in lens, forebrain, hindbrain, otic vesicle, anterior spinal cord neurons and posterior somites. At 36 hpf, expressed in the retinal ciliary marginal zone, brain, pancreas and weakly in pectoral fin. At 48 hpf, expressed in the retinal ciliary marginal zone, retinal ganglion cells, rhombomeres, otic vesicle and weakly in pectoral fin.

The protein resides in the membrane. It carries out the reaction alpha-D-glucosaminyl-[heparan sulfate](n) + 3'-phosphoadenylyl sulfate = 6-sulfo-alpha-D-glucosaminyl-[heparan sulfate](n) + adenosine 3',5'-bisphosphate + H(+). 6-O-sulfation enzyme which catalyzes the transfer of sulfate from 3'-phosphoadenosine 5'-phosphosulfate (PAPS) to position 6 of the N-sulfoglucosamine residue (GlcNS) of heparan sulfate. This Danio rerio (Zebrafish) protein is Heparan-sulfate 6-O-sulfotransferase 1-B.